Reading from the N-terminus, the 185-residue chain is Elongation factor P (185 aa).

The protein belongs to the elongation factor P family.

The protein localises to the cytoplasm. It participates in protein biosynthesis; polypeptide chain elongation. Its function is as follows. Involved in peptide bond synthesis. Stimulates efficient translation and peptide-bond synthesis on native or reconstituted 70S ribosomes in vitro. Probably functions indirectly by altering the affinity of the ribosome for aminoacyl-tRNA, thus increasing their reactivity as acceptors for peptidyl transferase. This is Elongation factor P from Limosilactobacillus fermentum (strain NBRC 3956 / LMG 18251) (Lactobacillus fermentum).